Consider the following 483-residue polypeptide: BTB/POZ domain and ankyrin repeat-containing protein COCH (483 aa).

Positions 25-105 (SDVVFSVEGR…LYSGQVSIVP (81 aa)) constitute a BTB domain. The C2HC NPR-type zinc-finger motif lies at 111–125 (RPNCGDRGCWHTHCT). Zn(2+) is bound by residues C114, C119, H121, and C124. 4 ANK repeats span residues 249–278 (QKIR…LNLD), 279–308 (EALA…DVNF), 313–342 (TGKT…DPNV), and 346–380 (DGVT…KLRL). Disordered regions lie at residues 395–435 (EEGN…NSNM) and 450–483 (MSTS…SHDY). Residues 398–414 (NNNNNANNNNTGSSATN) are compositionally biased toward low complexity. The span at 456 to 465 (DSGDDDHNSN) shows a compositional bias: basic and acidic residues.

It belongs to the plant 'ANKYRIN-BTB/POZ' family. 'NOOT-BOP-COCH-like' (NBCL) subfamily. Homodimer.

Its subcellular location is the nucleus. The protein resides in the cytoplasm. It is found in the cell membrane. It participates in protein modification; protein ubiquitination. In terms of biological role, may act as a substrate-specific adapter of an E3 ubiquitin-protein ligase complex (CUL3-RBX1-BTB) which mediates the ubiquitination and subsequent proteasomal degradation of target proteins. Transcriptional co-regulator involved in the promotion of leaf and floral meristem fate and determinacy. Promotes normal stipule growth and development. Required for the abscission of senescent organs, probably by regulating the cell wall disorganization in abscission zones (AZs, e.g. pulvini at the base of leaves). Down-regulates UNI expression in primordia of leaves and secondary inflorescences, and thereby controls their sizes and/or structures. Involved in the coordination of the symbiotic nodule developmental program. Promotes the formation of root nodules by interacting directly with APP1 to modulate the expression of the nuclear transcription factor Y subunit (NF-YA1), a key nodulin. Necessary for the robust maintenance of nodule identity throughout the nodule developmental program. The chain is BTB/POZ domain and ankyrin repeat-containing protein COCH from Pisum sativum (Garden pea).